We begin with the raw amino-acid sequence, 557 residues long: TWiK family of potassium channels protein 7 (557 aa).

Disordered stretches follow at residues 1 to 34 and 128 to 151; these read MTSS…EALL and DKSG…EEEE. Residues 1-165 are Cytoplasmic-facing; sequence MTSSSRGYQR…RKFAKLVLPH (165 aa). Over residues 134 to 151 the composition is skewed to acidic residues; sequence DIDDESDDESKDEDEEEE. Residues 166–186 traverse the membrane as a helical segment; that stretch reads VALVLLTCTYTVIGALIFYSV. N-linked (GlcNAc...) asparagine glycosylation is found at Asn220 and Asn237. An intramembrane region (pore-forming) is located at residues 270–290; it reads SIFFAVTVVTTIGYGNPVPVT. A helical transmembrane segment spans residues 295–315; the sequence is IWCILFSLLGIPLTLVTIADL. The Cytoplasmic segment spans residues 316–368; it reads GKFLSEHLVWLYGNYLKLKYLILSRHRKERREHVCEHCHSHGMGHDMNIEEKR. The chain crosses the membrane as a helical span at residues 369–389; the sequence is IPAFLVLAILIVYTAFGGVLM. Positions 397–417 form an intramembrane region, pore-forming; the sequence is FFTSFYWSFITMTTVGFGDLM. A helical transmembrane segment spans residues 426-446; sequence IILLYIILGLAITTMCIDLVG. Over 447–557 the chain is Cytoplasmic; it reads VQYIRKIHYF…SRYSLNRAFK (111 aa).

The protein belongs to the two pore domain potassium channel (TC 1.A.1.8) family.

It localises to the membrane. In Caenorhabditis elegans, this protein is TWiK family of potassium channels protein 7 (twk-7).